A 155-amino-acid polypeptide reads, in one-letter code: 3-hydroxyacyl-[acyl-carrier-protein] dehydratase FabZ (155 aa).

Residue H59 is part of the active site.

It belongs to the thioester dehydratase family. FabZ subfamily.

Its subcellular location is the cytoplasm. The catalysed reaction is a (3R)-hydroxyacyl-[ACP] = a (2E)-enoyl-[ACP] + H2O. Functionally, involved in unsaturated fatty acids biosynthesis. Catalyzes the dehydration of short chain beta-hydroxyacyl-ACPs and long chain saturated and unsaturated beta-hydroxyacyl-ACPs. The polypeptide is 3-hydroxyacyl-[acyl-carrier-protein] dehydratase FabZ (Bartonella henselae (strain ATCC 49882 / DSM 28221 / CCUG 30454 / Houston 1) (Rochalimaea henselae)).